Reading from the N-terminus, the 188-residue chain is ATP synthase subunit p18, mitochondrial (188 aa).

Residues 1-18 constitute a mitochondrion transit peptide; the sequence is MMRRVYSPVFCSVAAARF. PPR repeat units follow at residues 36–70, 75–109, and 116–146; these read TNTA…PPDI, ATLQ…EMQH, and NEES…METE.

F-type ATPases have 2 components, F(1) - the catalytic core - and F(o) - the membrane proton channel. F(1) has five subunits: alpha(3), beta(3), gamma(1), delta(1), epsilon(1), plus the additional subunit P18 (Tb427.05.1710) that is not present in F(1)F(o) ATP synthase from metazoa. Subunit P18 (Tb927.5.1710) interacts with the alpha subunit with a 1:1 stoichiometry; the interaction is direct. Subunit gamma is part of the central stalk. F(o) has three main subunits: a, b and c. The trypanosomal ATPase complex contains additional subunits that are not present in the F(1)F(o) ATP synthase from metazoa.

Its subcellular location is the mitochondrion. The protein localises to the mitochondrion inner membrane. Mitochondrial membrane ATP synthase (F(1)F(o) ATP synthase) produces ATP from ADP in the presence of a proton gradient across the membrane which is generated by electron transport complexes of the respiratory chain. F-type ATPases consist of two structural domains, F(1) - containing the extramembraneous catalytic core, and F(o) - containing the membrane proton channel, linked together by a central stalk and a peripheral stalk. During catalysis, ATP synthesis in the catalytic domain of F(1) is coupled via a rotary mechanism of the central stalk subunits to proton translocation. Subunits alpha and beta form the catalytic core in F(1). Rotation of the central stalk against the surrounding alpha(3)beta(3) subunits leads to hydrolysis of ATP in three separate catalytic sites on the beta subunits. Contrary to the procyclic, insect form that requires F(1)F(o) ATP synthase for ATP synthesis, the bloodstream form relies on ATP hydrolysis by F(1)F(o) ATP synthase to maintain its mitochondrial membrane potential. The protein is ATP synthase subunit p18, mitochondrial of Trypanosoma brucei brucei.